We begin with the raw amino-acid sequence, 475 residues long: Peroxisome proliferator-activated receptor gamma (475 aa).

Thr-54 carries an O-linked (GlcNAc) threonine glycan. Ser-82 bears the Phosphoserine; by MAPK mark. The nuclear receptor DNA-binding region spans 106-180; the sequence is AIECRVCGDK…VGMSHNAIRF (75 aa). 2 NR C4-type zinc fingers span residues 109–129 and 146–168; these read CRVCGDKASGFHYGVHACEGC and CDLNCRIHKKSRNKCQYCRFQKC. Positions 175–250 are interaction with FAM120B; that stretch reads HNAIRFGRMP…DKSPFVIYDM (76 aa). Residues 208-473 enclose the NR LBD domain; sequence DLRALAKHLY…HPLLQEIYKD (266 aa). Lys-222 participates in a covalent cross-link: Glycyl lysine isopeptide (Lys-Gly) (interchain with G-Cter in ubiquitin). Positions 465-473 match the 9aaTAD motif; sequence PLLQEIYKD.

It belongs to the nuclear hormone receptor family. NR1 subfamily. Interacts with FOXO1 (acetylated form). Heterodimer with other nuclear receptors, such as RXRA. The heterodimer with the retinoic acid receptor RXRA is called adipocyte-specific transcription factor ARF6. Interacts with NCOA6 coactivator, leading to a strong increase in transcription of target genes. Interacts with coactivator PPARBP, leading to a mild increase in transcription of target genes. Interacts with NOCA7 in a ligand-inducible manner. Interacts with NCOA1 and NCOA2 LXXLL motifs. Interacts with ASXL1, ASXL2, DNTTIP2, FAM120B, MAP2K1/MEK1, NR0B2, PDPK1, PRDM16, PRMT2 and TGFB1I1. Interacts (when activated by agonist) with PPP5C. Interacts with HELZ2 and THRAP3; the interaction stimulates the transcriptional activity of PPARG. Interacts with PER2, the interaction is ligand dependent and blocks PPARG recruitment to target promoters. Interacts with NOCT. Interacts with ACTN4. Interacts (when in the liganded conformation) with GPS2. Interacts with CRY1 and CRY2 in a ligand-dependent manner. In the absence of hormonal ligand, interacts with TACC1. In macrophages, interacts with PAQR3 and STUB1; the interactions promote PPARG poylubiquitination and STUB1-mediated degradation. O-GlcNAcylation at Thr-54 reduces transcriptional activity in adipocytes. Post-translationally, phosphorylated at basal conditions and dephosphorylated when treated with the ligand. May be dephosphorylated by PPP5C. The phosphorylated form may be inactive and dephosphorylation induces adipogenic activity. In terms of processing, ubiquitinated by E3 ubiquitin-protein ligase complex containing FBXO9; leading to proteasomal degradation. Ubiquitinated at Lys-222 by TRIM55 leading to proteasomal degradation. Ubiquitinated by E3 ubiquitin-protein ligase STUB1/CHIP; leading to proteasomal degradation.

It is found in the nucleus. Its subcellular location is the cytoplasm. PDPK1 activates its transcriptional activity independently of its kinase activity. Interacts with HELZ2 and THRAP3; the interaction enhances the transcriptional activity of PPARG. Functionally, nuclear receptor that binds peroxisome proliferators such as hypolipidemic drugs and fatty acids. Once activated by a ligand, the nuclear receptor binds to DNA specific PPAR response elements (PPRE) and modulates the transcription of its target genes, such as acyl-CoA oxidase. It therefore controls the peroxisomal beta-oxidation pathway of fatty acids. Key regulator of adipocyte differentiation and glucose homeostasis. ARF6 acts as a key regulator of the tissue-specific adipocyte P2 (aP2) enhancer. Acts as a critical regulator of gut homeostasis by suppressing NF-kappa-B-mediated pro-inflammatory responses. Plays a role in the regulation of cardiovascular circadian rhythms by regulating the transcription of BMAL1 in the blood vessels. The polypeptide is Peroxisome proliferator-activated receptor gamma (PPARG) (Cricetulus griseus (Chinese hamster)).